We begin with the raw amino-acid sequence, 153 residues long: 6,7-dimethyl-8-ribityllumazine synthase (153 aa).

5-amino-6-(D-ribitylamino)uracil contacts are provided by residues Phe22, 56 to 58 (AFE), and 80 to 82 (TVI). Residue 85 to 86 (ST) participates in (2S)-2-hydroxy-3-oxobutyl phosphate binding. His88 (proton donor) is an active-site residue. Phe113 is a 5-amino-6-(D-ribitylamino)uracil binding site. Arg127 is a binding site for (2S)-2-hydroxy-3-oxobutyl phosphate.

It belongs to the DMRL synthase family. As to quaternary structure, forms an icosahedral capsid composed of 60 subunits, arranged as a dodecamer of pentamers.

It catalyses the reaction (2S)-2-hydroxy-3-oxobutyl phosphate + 5-amino-6-(D-ribitylamino)uracil = 6,7-dimethyl-8-(1-D-ribityl)lumazine + phosphate + 2 H2O + H(+). It functions in the pathway cofactor biosynthesis; riboflavin biosynthesis; riboflavin from 2-hydroxy-3-oxobutyl phosphate and 5-amino-6-(D-ribitylamino)uracil: step 1/2. Functionally, catalyzes the formation of 6,7-dimethyl-8-ribityllumazine by condensation of 5-amino-6-(D-ribitylamino)uracil with 3,4-dihydroxy-2-butanone 4-phosphate. This is the penultimate step in the biosynthesis of riboflavin. In Actinobacillus pleuropneumoniae (Haemophilus pleuropneumoniae), this protein is 6,7-dimethyl-8-ribityllumazine synthase.